The following is a 349-amino-acid chain: Probable ethanolamine kinase (349 aa).

The protein belongs to the choline/ethanolamine kinase family.

It is found in the cytoplasm. It carries out the reaction ethanolamine + ATP = phosphoethanolamine + ADP + H(+). It functions in the pathway phospholipid metabolism; phosphatidylethanolamine biosynthesis; phosphatidylethanolamine from ethanolamine: step 1/3. Highly specific for ethanolamine phosphorylation. May be a rate-controlling step in phosphatidylethanolamine biosynthesis. This Nematostella vectensis (Starlet sea anemone) protein is Probable ethanolamine kinase (etnk).